We begin with the raw amino-acid sequence, 511 residues long: 2,3-bisphosphoglycerate-independent phosphoglycerate mutase (511 aa).

Asp-12 is a binding site for Mn(2+). Position 36 is a phosphotyrosine (Tyr-36). Residue Ser-62 coordinates Mn(2+). Ser-62 (phosphoserine intermediate) is an active-site residue. Substrate-binding positions include His-123, 153–154 (RD), Arg-185, Arg-191, 261–264 (RPDR), and Lys-336. 5 residues coordinate Mn(2+): Asp-403, His-407, Asp-444, His-445, and His-462.

The protein belongs to the BPG-independent phosphoglycerate mutase family. As to quaternary structure, monomer. Mn(2+) is required as a cofactor.

It catalyses the reaction (2R)-2-phosphoglycerate = (2R)-3-phosphoglycerate. It functions in the pathway carbohydrate degradation; glycolysis; pyruvate from D-glyceraldehyde 3-phosphate: step 3/5. Its function is as follows. Catalyzes the interconversion of 2-phosphoglycerate and 3-phosphoglycerate. The chain is 2,3-bisphosphoglycerate-independent phosphoglycerate mutase from Geobacillus thermodenitrificans (strain NG80-2).